Reading from the N-terminus, the 308-residue chain is Cytochrome b (308 aa).

Helical transmembrane passes span 1–21 (FGSLLGLCLITQIITGLLLAM), 45–66 (WLIRNLHANGASFFFICIYLHI), 81–101 (WNIGVILLLTLMATAFVGYVL), and 146–166 (FFAFHFLLPFVIAGLTLVHLT). Heme b contacts are provided by His-51 and His-65. Heme b-binding residues include His-150 and His-164. His-169 provides a ligand contact to a ubiquinone. The next 3 membrane-spanning stretches (helical) occupy residues 194-214 (IKDLLGFALMLIPLITLALFS), 256-276 (LGGVLALAASVLILFLIPLLH), and 288-308 (LSQILFWTLVADLLILTWVGS).

The protein belongs to the cytochrome b family. The cytochrome bc1 complex contains 11 subunits: 3 respiratory subunits (MT-CYB, CYC1 and UQCRFS1), 2 core proteins (UQCRC1 and UQCRC2) and 6 low-molecular weight proteins (UQCRH/QCR6, UQCRB/QCR7, UQCRQ/QCR8, UQCR10/QCR9, UQCR11/QCR10 and a cleavage product of UQCRFS1). This cytochrome bc1 complex then forms a dimer. Heme b is required as a cofactor.

It is found in the mitochondrion inner membrane. Functionally, component of the ubiquinol-cytochrome c reductase complex (complex III or cytochrome b-c1 complex) that is part of the mitochondrial respiratory chain. The b-c1 complex mediates electron transfer from ubiquinol to cytochrome c. Contributes to the generation of a proton gradient across the mitochondrial membrane that is then used for ATP synthesis. This chain is Cytochrome b (MT-CYB), found in Corvus corax (Common raven).